The following is a 441-amino-acid chain: Xaa-Pro dipeptidase (441 aa).

Mn(2+) is bound by residues D244, D255, H336, E381, and E420.

Belongs to the peptidase M24B family. Bacterial-type prolidase subfamily. Mn(2+) is required as a cofactor.

It catalyses the reaction Xaa-L-Pro dipeptide + H2O = an L-alpha-amino acid + L-proline. Splits dipeptides with a prolyl residue in the C-terminal position. This chain is Xaa-Pro dipeptidase, found in Xanthomonas oryzae pv. oryzae (strain MAFF 311018).